The chain runs to 135 residues: UPF0299 membrane protein YPK_2559 (135 aa).

3 helical membrane passes run 30 to 50 (LLLP…FVLL), 66 to 86 (LLIR…MQYY), and 93 to 113 (FGPI…VVAY).

This sequence belongs to the UPF0299 family.

The protein localises to the cell inner membrane. This is UPF0299 membrane protein YPK_2559 from Yersinia pseudotuberculosis serotype O:3 (strain YPIII).